We begin with the raw amino-acid sequence, 157 residues long: Cell cycle regulator of non-homologous end joining (157 aa).

The residue at position 1 (methionine 1) is an N-acetylmethionine. A KBM motif is present at residues 1–21 (METLKSKTKTRVLPSWMTAPV). A compositionally biased stretch (basic and acidic residues) spans 80–91 (KPWEQRSLEATD). Residues 80 to 148 (KPWEQRSLEA…EEEKEEEDAL (69 aa)) are disordered. A compositionally biased stretch (low complexity) spans 96-106 (SPPCSSSPGSS). The short motif at 147 to 157 (ALKYVREIFFS) is the XLM element.

As to quaternary structure, interacts (via KBM motif) with XRCC5/Ku80 and XRCC6/Ku70 heterodimer. Interacts (via XLF motif) with TRIM28/KAP1, ATM, MRE11, NBN and RAD50. Interacts with splicing factor SF3B1. Interacts with ERCC6L2; this interaction is DNA independent.

The protein resides in the cytoplasm. The protein localises to the nucleus. It localises to the chromosome. Cell-cycle-specific regulator of classical non-homologous end joining (NHEJ) of DNA double-strand break (DSB) repair, which can act both as an activator or inhibitor of NHEJ, depending on the cell cycle phase. Acts as a regulator of DNA repair pathway choice by specifically inhibiting classical NHEJ during the S and G2 phases, thereby promoting error-free repair by homologous recombination during cell cycle phases when sister chromatids are present. Preferentially protects single-stranded overhangs at break sites by inhibiting classical NHEJ, thereby creating a local environment that favors homologous recombination. Acts via interaction with XRCC5/Ku80 and XRCC6/Ku70. In contrast, acts as an activator of NHEJ during G1 phase of the cell cycle: promotes classical NHEJ in G1 phase cells via multivalent interactions that increase the affinity of DNA damage response proteins for DSB-associated chromatin. Also involved in immunoglobulin V(D)J recombination. May also act as an indirect regulator of proteasome. The sequence is that of Cell cycle regulator of non-homologous end joining from Mus musculus (Mouse).